We begin with the raw amino-acid sequence, 451 residues long: Methionine aminopeptidase 2-2 (451 aa).

Positions 1 to 97 (MAAQVEDDVA…PRVLISDLFP (97 aa)) are disordered. The segment covering 19–28 (TKPTNGTSQP) has biased composition (polar residues). Residues 35 to 45 (EAEDSDDDAEG) are compositionally biased toward acidic residues. Residues 60 to 73 (KKKKKRKPRKKKKA) show a composition bias toward basic residues. A compositionally biased stretch (low complexity) spans 74–83 (GTSATAGAKS). A substrate-binding site is contributed by H204. Positions 224, 235, and 304 each coordinate a divalent metal cation. H312 contributes to the substrate binding site. A divalent metal cation-binding residues include E337 and E432.

This sequence belongs to the peptidase M24A family. Methionine aminopeptidase eukaryotic type 2 subfamily. Co(2+) serves as cofactor. It depends on Zn(2+) as a cofactor. The cofactor is Mn(2+). Fe(2+) is required as a cofactor.

It is found in the cytoplasm. It carries out the reaction Release of N-terminal amino acids, preferentially methionine, from peptides and arylamides.. Cotranslationally removes the N-terminal methionine from nascent proteins. The N-terminal methionine is often cleaved when the second residue in the primary sequence is small and uncharged (Met-Ala-, Cys, Gly, Pro, Ser, Thr, or Val). The chain is Methionine aminopeptidase 2-2 from Leptosphaeria maculans (strain JN3 / isolate v23.1.3 / race Av1-4-5-6-7-8) (Blackleg fungus).